Here is a 277-residue protein sequence, read N- to C-terminus: Large ribosomal subunit protein uL2 (277 aa).

The disordered stretch occupies residues 223-261 (SVMNPNDHPHGGGEGKSPVGRPSPVTPWGKPALGYKTRK).

It belongs to the universal ribosomal protein uL2 family. Part of the 50S ribosomal subunit. Forms a bridge to the 30S subunit in the 70S ribosome.

Its function is as follows. One of the primary rRNA binding proteins. Required for association of the 30S and 50S subunits to form the 70S ribosome, for tRNA binding and peptide bond formation. It has been suggested to have peptidyltransferase activity; this is somewhat controversial. Makes several contacts with the 16S rRNA in the 70S ribosome. The sequence is that of Large ribosomal subunit protein uL2 from Clostridium botulinum (strain Alaska E43 / Type E3).